A 463-amino-acid chain; its full sequence is Trigger factor (463 aa).

The region spanning 162 to 243 is the PPIase FKBP-type domain; it reads GDHVSIDLSA…VHSVKLKELP (82 aa). Polar residues predominate over residues 427–444; sequence SGNTIEPPTPVHTETITV. The tract at residues 427–463 is disordered; the sequence is SGNTIEPPTPVHTETITVASGDEETEESAAEQGETEK.

The protein belongs to the FKBP-type PPIase family. Tig subfamily.

Its subcellular location is the cytoplasm. It catalyses the reaction [protein]-peptidylproline (omega=180) = [protein]-peptidylproline (omega=0). Involved in protein export. Acts as a chaperone by maintaining the newly synthesized protein in an open conformation. Functions as a peptidyl-prolyl cis-trans isomerase. The chain is Trigger factor from Thermobifida fusca (strain YX).